The following is a 667-amino-acid chain: tRNA 5-methylaminomethyl-2-thiouridine biosynthesis bifunctional protein MnmC (667 aa).

Positions 1–12 are enriched in polar residues; it reads MSKQQAPNTTGI. Positions 1–20 are disordered; the sequence is MSKQQAPNTTGIGTADLQWH. The segment at 1-240 is tRNA (mnm(5)s(2)U34)-methyltransferase; the sequence is MSKQQAPNTT…KRECLRGVLE (240 aa). The tract at residues 268-667 is FAD-dependent cmnm(5)s(2)U34 oxidoreductase; sequence IGAGIAGAAC…LVRSLKKPPL (400 aa).

The protein in the N-terminal section; belongs to the methyltransferase superfamily. tRNA (mnm(5)s(2)U34)-methyltransferase family. In the C-terminal section; belongs to the DAO family. Requires FAD as cofactor.

The protein resides in the cytoplasm. It catalyses the reaction 5-aminomethyl-2-thiouridine(34) in tRNA + S-adenosyl-L-methionine = 5-methylaminomethyl-2-thiouridine(34) in tRNA + S-adenosyl-L-homocysteine + H(+). In terms of biological role, catalyzes the last two steps in the biosynthesis of 5-methylaminomethyl-2-thiouridine (mnm(5)s(2)U) at the wobble position (U34) in tRNA. Catalyzes the FAD-dependent demodification of cmnm(5)s(2)U34 to nm(5)s(2)U34, followed by the transfer of a methyl group from S-adenosyl-L-methionine to nm(5)s(2)U34, to form mnm(5)s(2)U34. This is tRNA 5-methylaminomethyl-2-thiouridine biosynthesis bifunctional protein MnmC from Magnetococcus marinus (strain ATCC BAA-1437 / JCM 17883 / MC-1).